An 89-amino-acid chain; its full sequence is Acyl carrier protein MbtL (89 aa).

A Carrier domain is found at 8-83 (NHVSAELLGI…DLQAAIAAEP (76 aa)). Ser43 bears the O-(pantetheine 4'-phosphoryl)serine mark.

4'-phosphopantetheine is transferred from CoA to a specific serine of apo-ACP, leading to the activated holo-ACP form.

Its subcellular location is the cytoplasm. It participates in siderophore biosynthesis; mycobactin biosynthesis. Acyl carrier protein involved in the formation of acyl-S-ACP intermediates within the mycobactin biosynthesis process. The polypeptide is Acyl carrier protein MbtL (mbtL) (Mycolicibacterium paratuberculosis (strain ATCC BAA-968 / K-10) (Mycobacterium paratuberculosis)).